Consider the following 229-residue polypeptide: Matrix protein (229 aa).

Residues 2-4 (KSI) carry the dynamin binding motif. A disordered region spans residues 11–36 (AKKEKKREKKSNHGSHSMEWESPPSY). Residues 13–23 (KEKKREKKSNH) are compositionally biased toward basic residues. A PPXY motif motif is present at residues 33–36 (PPSY). Residues 42-45 (PSAP) carry the PTAP/PSAP motif motif.

Belongs to the vesiculoviruses matrix protein family. Homomultimer. Interacts with viral nucleocapsid; this interaction contributes to the virion assembly. Interacts with the viral envelope glycoprotein; this interaction contributes to the virion assembly. Interacts with host RAE1-NUP98 complex. Interacts with host NEDD4 and TSG101. Interacts with host dynamin. Interacts with host NDUFAF4; the interaction inhibits viral propagation and is independent of interferon activation. Interacts with host GTF2H5; the interaction may inhibit host transcription. In terms of processing, phosphorylated by host.

The protein resides in the virion. It localises to the host endomembrane system. It is found in the host nucleus membrane. Its subcellular location is the host nucleus. The protein localises to the host cytoplasm. Its function is as follows. Forms a double layer around the helical nucleocapsid, the inner matrix layer binding to the N helix and the outer matrix layer binding to the envelope glycoprotein. Plays a major role in assembly and budding of virion, by recruiting cellular partners of the ESCRT complexes that play a key role in releasing the budding particle from the host membrane. Condensates the ribonucleocapsid core during virus assembly. Inhibits the host mRNA nuclear export thereby inducing the shut off of cellular transcription and preventing the interferon signaling and the establishment of antiviral state in infected cells. This shutoff presumably inhibits interferon signaling and thus establishment of antiviral state in virus infected cells. Induces cell-rounding, cytoskeleton disorganization and apoptosis in infected cell. Inhibits host transcription, possibly through interaction with host DNA repair factor IIH/TFIIH GTF2H5 subunit. This Piry virus (PIRYV) protein is Matrix protein (M).